The following is a 335-amino-acid chain: Adenosine deaminase (335 aa).

Zn(2+) contacts are provided by histidine 12 and histidine 14. Histidine 14 and aspartate 16 together coordinate substrate. Histidine 197 serves as a coordination point for Zn(2+). Glutamate 200 acts as the Proton donor in catalysis. Aspartate 278 is a binding site for Zn(2+).

It belongs to the metallo-dependent hydrolases superfamily. Adenosine and AMP deaminases family. Adenosine deaminase subfamily. Zn(2+) serves as cofactor.

It carries out the reaction adenosine + H2O + H(+) = inosine + NH4(+). It catalyses the reaction 2'-deoxyadenosine + H2O + H(+) = 2'-deoxyinosine + NH4(+). In terms of biological role, catalyzes the hydrolytic deamination of adenosine and 2-deoxyadenosine. This is Adenosine deaminase from Clostridium botulinum (strain Langeland / NCTC 10281 / Type F).